We begin with the raw amino-acid sequence, 322 residues long: Elongation factor P--(R)-beta-lysine ligase (322 aa).

Substrate is bound at residue 72 to 74 (SPE). ATP contacts are provided by residues 96–98 (RNN) and Asn-106. Tyr-115 serves as a coordination point for substrate. Position 241–242 (241–242 (EL)) interacts with ATP. Glu-248 lines the substrate pocket. Gly-297 provides a ligand contact to ATP.

Belongs to the class-II aminoacyl-tRNA synthetase family. EpmA subfamily. Homodimer.

It catalyses the reaction D-beta-lysine + L-lysyl-[protein] + ATP = N(6)-((3R)-3,6-diaminohexanoyl)-L-lysyl-[protein] + AMP + diphosphate + H(+). Functionally, with EpmB is involved in the beta-lysylation step of the post-translational modification of translation elongation factor P (EF-P). Catalyzes the ATP-dependent activation of (R)-beta-lysine produced by EpmB, forming a lysyl-adenylate, from which the beta-lysyl moiety is then transferred to the epsilon-amino group of a conserved specific lysine residue in EF-P. The sequence is that of Elongation factor P--(R)-beta-lysine ligase from Buchnera aphidicola subsp. Baizongia pistaciae (strain Bp).